Reading from the N-terminus, the 201-residue chain is Holliday junction branch migration complex subunit RuvA (201 aa).

The domain I stretch occupies residues 1–63 (MIAFVSGTVA…EDSLTLYGFA (63 aa)). Residues 64 to 139 (DDDERQVFEL…RLGEPIGAPA (76 aa)) are domain II. Positions 139–143 (AVGAP) are flexible linker. The tract at residues 144-201 (VSTGWRDQLHAALIGLGYATREADEAVSAVAPQAEAAGGTPQVGALLKAALQTLNRAR) is domain III.

The protein belongs to the RuvA family. As to quaternary structure, homotetramer. Forms an RuvA(8)-RuvB(12)-Holliday junction (HJ) complex. HJ DNA is sandwiched between 2 RuvA tetramers; dsDNA enters through RuvA and exits via RuvB. An RuvB hexamer assembles on each DNA strand where it exits the tetramer. Each RuvB hexamer is contacted by two RuvA subunits (via domain III) on 2 adjacent RuvB subunits; this complex drives branch migration. In the full resolvosome a probable DNA-RuvA(4)-RuvB(12)-RuvC(2) complex forms which resolves the HJ.

Its subcellular location is the cytoplasm. Functionally, the RuvA-RuvB-RuvC complex processes Holliday junction (HJ) DNA during genetic recombination and DNA repair, while the RuvA-RuvB complex plays an important role in the rescue of blocked DNA replication forks via replication fork reversal (RFR). RuvA specifically binds to HJ cruciform DNA, conferring on it an open structure. The RuvB hexamer acts as an ATP-dependent pump, pulling dsDNA into and through the RuvAB complex. HJ branch migration allows RuvC to scan DNA until it finds its consensus sequence, where it cleaves and resolves the cruciform DNA. The protein is Holliday junction branch migration complex subunit RuvA of Streptomyces coelicolor (strain ATCC BAA-471 / A3(2) / M145).